Reading from the N-terminus, the 260-residue chain is Putative methylesterase 19 (260 aa).

The active-site Acyl-ester intermediate is Ser-81. Residues Asp-210 and His-238 each act as charge relay system in the active site.

This sequence belongs to the AB hydrolase superfamily. Methylesterase family.

In terms of biological role, putative methylesterase. The polypeptide is Putative methylesterase 19 (Arabidopsis thaliana (Mouse-ear cress)).